Reading from the N-terminus, the 170-residue chain is Large ribosomal subunit protein uL10 (170 aa).

Belongs to the universal ribosomal protein uL10 family. As to quaternary structure, part of the ribosomal stalk of the 50S ribosomal subunit. The N-terminus interacts with L11 and the large rRNA to form the base of the stalk. The C-terminus forms an elongated spine to which L12 dimers bind in a sequential fashion forming a multimeric L10(L12)X complex.

Forms part of the ribosomal stalk, playing a central role in the interaction of the ribosome with GTP-bound translation factors. This chain is Large ribosomal subunit protein uL10, found in Jannaschia sp. (strain CCS1).